Here is a 244-residue protein sequence, read N- to C-terminus: 3-deoxy-manno-octulosonate cytidylyltransferase (244 aa).

This sequence belongs to the KdsB family.

Its subcellular location is the cytoplasm. The enzyme catalyses 3-deoxy-alpha-D-manno-oct-2-ulosonate + CTP = CMP-3-deoxy-beta-D-manno-octulosonate + diphosphate. The protein operates within nucleotide-sugar biosynthesis; CMP-3-deoxy-D-manno-octulosonate biosynthesis; CMP-3-deoxy-D-manno-octulosonate from 3-deoxy-D-manno-octulosonate and CTP: step 1/1. It functions in the pathway bacterial outer membrane biogenesis; lipopolysaccharide biosynthesis. Its function is as follows. Activates KDO (a required 8-carbon sugar) for incorporation into bacterial lipopolysaccharide in Gram-negative bacteria. The chain is 3-deoxy-manno-octulosonate cytidylyltransferase from Flavobacterium johnsoniae (strain ATCC 17061 / DSM 2064 / JCM 8514 / BCRC 14874 / CCUG 350202 / NBRC 14942 / NCIMB 11054 / UW101) (Cytophaga johnsonae).